The sequence spans 284 residues: Orotidine 5'-phosphate decarboxylase (284 aa).

Catalysis depends on K95, which acts as the Proton donor.

It belongs to the OMP decarboxylase family. Type 2 subfamily.

The catalysed reaction is orotidine 5'-phosphate + H(+) = UMP + CO2. It functions in the pathway pyrimidine metabolism; UMP biosynthesis via de novo pathway; UMP from orotate: step 2/2. The chain is Orotidine 5'-phosphate decarboxylase from Leptothrix cholodnii (strain ATCC 51168 / LMG 8142 / SP-6) (Leptothrix discophora (strain SP-6)).